The sequence spans 132 residues: MYSVLQLLKCLCSCWRKGPEGRRFQTEAAVCARPAWSPHPAGASEALGALPPPRQLVEKRRVSPPRRLDQSGRDGGAVAKCSLSRGLSPPGWTGRSLLRPWGSAAVLGSRAALACVLRPSRGVMPATIQSRR.

The interval 39–93 is disordered; the sequence is HPAGASEALGALPPPRQLVEKRRVSPPRRLDQSGRDGGAVAKCSLSRGLSPPGWT. Residues 56–72 are compositionally biased toward basic and acidic residues; that stretch reads LVEKRRVSPPRRLDQSG.

This is an uncharacterized protein from Homo sapiens (Human).